The chain runs to 386 residues: Succinate--CoA ligase [ADP-forming] subunit beta (386 aa).

The 236-residue stretch at 9–244 (KDLLTAYQLP…PSQENIRDVL (236 aa)) folds into the ATP-grasp domain. ATP is bound by residues Lys-46, 53–55 (GRG), Val-102, and Glu-107. Positions 199 and 213 each coordinate Mg(2+). Substrate is bound by residues Asn-264 and 321-323 (GIM).

Belongs to the succinate/malate CoA ligase beta subunit family. In terms of assembly, heterotetramer of two alpha and two beta subunits. Requires Mg(2+) as cofactor.

The enzyme catalyses succinate + ATP + CoA = succinyl-CoA + ADP + phosphate. The catalysed reaction is GTP + succinate + CoA = succinyl-CoA + GDP + phosphate. The protein operates within carbohydrate metabolism; tricarboxylic acid cycle; succinate from succinyl-CoA (ligase route): step 1/1. In terms of biological role, succinyl-CoA synthetase functions in the citric acid cycle (TCA), coupling the hydrolysis of succinyl-CoA to the synthesis of either ATP or GTP and thus represents the only step of substrate-level phosphorylation in the TCA. The beta subunit provides nucleotide specificity of the enzyme and binds the substrate succinate, while the binding sites for coenzyme A and phosphate are found in the alpha subunit. This is Succinate--CoA ligase [ADP-forming] subunit beta from Chlamydia trachomatis serovar L2 (strain ATCC VR-902B / DSM 19102 / 434/Bu).